The primary structure comprises 291 residues: 33 kDa chaperonin (291 aa).

2 cysteine pairs are disulfide-bonded: C235-C237 and C268-C271.

Belongs to the HSP33 family. In terms of processing, under oxidizing conditions two disulfide bonds are formed involving the reactive cysteines. Under reducing conditions zinc is bound to the reactive cysteines and the protein is inactive.

It localises to the cytoplasm. Redox regulated molecular chaperone. Protects both thermally unfolding and oxidatively damaged proteins from irreversible aggregation. Plays an important role in the bacterial defense system toward oxidative stress. This Bacillus pumilus (strain SAFR-032) protein is 33 kDa chaperonin.